The chain runs to 160 residues: Cytochrome b6-f complex subunit 4 (160 aa).

3 helical membrane-spanning segments follow: residues 36–56 (LLYI…GLAV), 95–115 (LLGV…PFIE), and 131–151 (ILFL…TFPI).

Belongs to the cytochrome b family. PetD subfamily. In terms of assembly, the 4 large subunits of the cytochrome b6-f complex are cytochrome b6, subunit IV (17 kDa polypeptide, petD), cytochrome f and the Rieske protein, while the 4 small subunits are petG, petL, petM and petN. The complex functions as a dimer.

It localises to the plastid. Its subcellular location is the chloroplast thylakoid membrane. Component of the cytochrome b6-f complex, which mediates electron transfer between photosystem II (PSII) and photosystem I (PSI), cyclic electron flow around PSI, and state transitions. The polypeptide is Cytochrome b6-f complex subunit 4 (Chlamydomonas moewusii (Chlamydomonas eugametos)).